The primary structure comprises 103 residues: Histone H4 (103 aa).

Residues 1 to 14 show a composition bias toward gly residues; sequence MSGRGKGGKGLGKG. The segment at 1 to 20 is disordered; sequence MSGRGKGGKGLGKGGAKRHR. Serine 2 is modified (N-acetylserine). An N6-acetyl-N6-methyllysine; alternate mark is found at lysine 6 and lysine 13. Lysine 17 carries the N6-acetyllysine modification. The DNA-binding element occupies 17–21; the sequence is KRHRK. An N6-methyllysine modification is found at lysine 21.

The protein belongs to the histone H4 family. As to quaternary structure, the nucleosome is a histone octamer containing two molecules each of H2A, H2B, H3 and H4 assembled in one H3-H4 heterotetramer and two H2A-H2B heterodimers. The octamer wraps approximately 147 bp of DNA.

The protein localises to the nucleus. It is found in the chromosome. Its function is as follows. Core component of nucleosome. Nucleosomes wrap and compact DNA into chromatin, limiting DNA accessibility to the cellular machineries which require DNA as a template. Histones thereby play a central role in transcription regulation, DNA repair, DNA replication and chromosomal stability. DNA accessibility is regulated via a complex set of post-translational modifications of histones, also called histone code, and nucleosome remodeling. The chain is Histone H4 from Holothuria tubulosa (Tubular sea cucumber).